The following is a 553-amino-acid chain: NAD(P)H-quinone oxidoreductase chain 4 2 (553 aa).

The next 14 helical transmembrane spans lie at 6 to 26 (FPWL…IPVI), 34 to 54 (VRWF…YVFL), 87 to 107 (ISAP…LAAW), 115 to 135 (LFYF…VAQD), 136 to 156 (LLLF…LVSI), 169 to 189 (FLLY…AMAL), 210 to 230 (ALEL…LAIF), 244 to 264 (SAPV…YGLI), 276 to 296 (IYFA…GAFA), 312 to 332 (VSHM…GISG), 333 to 353 (AMLQ…LAGV), 376 to 396 (VFAL…MSGF), 418 to 438 (VVTV…LLSM), and 487 to 507 (IFIA…PQLA).

Belongs to the complex I subunit 4 family.

It localises to the cellular thylakoid membrane. It catalyses the reaction a plastoquinone + NADH + (n+1) H(+)(in) = a plastoquinol + NAD(+) + n H(+)(out). It carries out the reaction a plastoquinone + NADPH + (n+1) H(+)(in) = a plastoquinol + NADP(+) + n H(+)(out). Its function is as follows. NDH-1 shuttles electrons from NAD(P)H, via FMN and iron-sulfur (Fe-S) centers, to quinones in the respiratory chain. The immediate electron acceptor for the enzyme in this species is believed to be plastoquinone. Couples the redox reaction to proton translocation (for every two electrons transferred, four hydrogen ions are translocated across the cytoplasmic membrane), and thus conserves the redox energy in a proton gradient. This Microcystis aeruginosa (strain NIES-843 / IAM M-2473) protein is NAD(P)H-quinone oxidoreductase chain 4 2.